The following is a 206-amino-acid chain: Peptidyl-tRNA hydrolase (206 aa).

Tyrosine 19 lines the tRNA pocket. Histidine 24 functions as the Proton acceptor in the catalytic mechanism. 3 residues coordinate tRNA: phenylalanine 70, asparagine 72, and asparagine 118.

It belongs to the PTH family. In terms of assembly, monomer.

The protein localises to the cytoplasm. The enzyme catalyses an N-acyl-L-alpha-aminoacyl-tRNA + H2O = an N-acyl-L-amino acid + a tRNA + H(+). Functionally, hydrolyzes ribosome-free peptidyl-tRNAs (with 1 or more amino acids incorporated), which drop off the ribosome during protein synthesis, or as a result of ribosome stalling. Catalyzes the release of premature peptidyl moieties from peptidyl-tRNA molecules trapped in stalled 50S ribosomal subunits, and thus maintains levels of free tRNAs and 50S ribosomes. This chain is Peptidyl-tRNA hydrolase, found in Synechococcus sp. (strain CC9902).